A 275-amino-acid polypeptide reads, in one-letter code: ADP-dependent (S)-NAD(P)H-hydrate dehydratase (275 aa).

Residues 5–273 enclose the YjeF C-terminal domain; it reads TDEILAKVIK…EEIPLFMKKY (269 aa). (6S)-NADPHX-binding residues include alanine 40, glycine 103, and histidine 151. Glycine 214 serves as a coordination point for AMP. Residue aspartate 215 participates in (6S)-NADPHX binding.

It belongs to the NnrD/CARKD family. In terms of assembly, homotetramer. Requires Mg(2+) as cofactor.

The catalysed reaction is (6S)-NADHX + ADP = AMP + phosphate + NADH + H(+). The enzyme catalyses (6S)-NADPHX + ADP = AMP + phosphate + NADPH + H(+). Functionally, catalyzes the dehydration of the S-form of NAD(P)HX at the expense of ADP, which is converted to AMP. Together with NAD(P)HX epimerase, which catalyzes the epimerization of the S- and R-forms, the enzyme allows the repair of both epimers of NAD(P)HX, a damaged form of NAD(P)H that is a result of enzymatic or heat-dependent hydration. The sequence is that of ADP-dependent (S)-NAD(P)H-hydrate dehydratase from Lactococcus lactis subsp. lactis (strain IL1403) (Streptococcus lactis).